The sequence spans 250 residues: Uracil-DNA glycosylase (250 aa).

D78 (proton acceptor) is an active-site residue.

It belongs to the uracil-DNA glycosylase (UDG) superfamily. UNG family.

The protein localises to the cytoplasm. The enzyme catalyses Hydrolyzes single-stranded DNA or mismatched double-stranded DNA and polynucleotides, releasing free uracil.. In terms of biological role, excises uracil residues from the DNA which can arise as a result of misincorporation of dUMP residues by DNA polymerase or due to deamination of cytosine. In Albidiferax ferrireducens (strain ATCC BAA-621 / DSM 15236 / T118) (Rhodoferax ferrireducens), this protein is Uracil-DNA glycosylase.